We begin with the raw amino-acid sequence, 208 residues long: Protein GrpE (208 aa).

Over residues 1-25 the composition is skewed to basic and acidic residues; sequence MVDNKDFNEELKENIQEELDNETKA. A disordered region spans residues 1 to 38; it reads MVDNKDFNEELKENIQEELDNETKAENPNIDEEVEEVS. A compositionally biased stretch (acidic residues) spans 29-38; it reads NIDEEVEEVS.

Belongs to the GrpE family. In terms of assembly, homodimer.

It localises to the cytoplasm. Functionally, participates actively in the response to hyperosmotic and heat shock by preventing the aggregation of stress-denatured proteins, in association with DnaK and GrpE. It is the nucleotide exchange factor for DnaK and may function as a thermosensor. Unfolded proteins bind initially to DnaJ; upon interaction with the DnaJ-bound protein, DnaK hydrolyzes its bound ATP, resulting in the formation of a stable complex. GrpE releases ADP from DnaK; ATP binding to DnaK triggers the release of the substrate protein, thus completing the reaction cycle. Several rounds of ATP-dependent interactions between DnaJ, DnaK and GrpE are required for fully efficient folding. The sequence is that of Protein GrpE from Clostridium perfringens (strain ATCC 13124 / DSM 756 / JCM 1290 / NCIMB 6125 / NCTC 8237 / Type A).